We begin with the raw amino-acid sequence, 583 residues long: Mitogen-activated protein kinase 4 (583 aa).

In terms of domain architecture, Protein kinase spans 20-312; the sequence is FIDFQPLGFG…AEMGLQHPYM (293 aa). Residues 26-34 and Lys-49 contribute to the ATP site; that span reads LGFGVNGLV. Asp-149 acts as the Proton acceptor in catalysis. Position 186 is a phosphoserine; by PAK1, PAK2 and PAK3 (Ser-186). Residues 186–188 carry the SEG motif motif; sequence SEG. The FRIEDE motif signature appears at 328-333; that stretch reads FRIEDE. Basic and acidic residues-rich tracts occupy residues 366–379 and 391–410; these read DRCQ…RDPR and VDPR…QSHS. The disordered stretch occupies residues 366 to 410; that stretch reads DRCQDASEVQRDPRAGSTPLAEDVQVDPRKDSQSSSERFLEQSHS. Ser-430 is modified (phosphoserine). A disordered region spans residues 495–531; that stretch reads STQSGSERASPPPDAPEPRLSASPPGHPTPIDGGASP.

It belongs to the protein kinase superfamily. CMGC Ser/Thr protein kinase family. MAP kinase subfamily. As to quaternary structure, homodimer. Heterodimer with ERK3/MAPK6. Interacts with (via FRIEDE motif) MAPKAPK5. The cofactor is Mg(2+). In terms of processing, phosphorylated at Ser-186 by PAK1, PAK2 and PAK3 resulting in catalytic activation. Phosphorylated by MAPKAPK5 at other sites.

It localises to the cytoplasm. Its subcellular location is the nucleus. It carries out the reaction L-seryl-[protein] + ATP = O-phospho-L-seryl-[protein] + ADP + H(+). It catalyses the reaction L-threonyl-[protein] + ATP = O-phospho-L-threonyl-[protein] + ADP + H(+). With respect to regulation, activated by phosphorylation at Ser-186. Atypical MAPK protein. Phosphorylates microtubule-associated protein 2 (MAP2) and MAPKAPK5. The precise role of the complex formed with MAPKAPK5 is still unclear, but the complex follows a complex set of phosphorylation events: upon interaction with atypical MAPKAPK5, ERK4/MAPK4 is phosphorylated at Ser-186 and then mediates phosphorylation and activation of MAPKAPK5, which in turn phosphorylates ERK4/MAPK4. May promote entry in the cell cycle. This chain is Mitogen-activated protein kinase 4 (Mapk4), found in Mus musculus (Mouse).